The primary structure comprises 445 residues: Xylose isomerase (445 aa).

Residues histidine 107 and aspartate 110 contribute to the active site. The Mg(2+) site is built by glutamate 238, glutamate 274, histidine 277, aspartate 302, aspartate 313, aspartate 315, and aspartate 345.

It belongs to the xylose isomerase family. Homotetramer. Mg(2+) serves as cofactor.

Its subcellular location is the cytoplasm. The enzyme catalyses alpha-D-xylose = alpha-D-xylulofuranose. This chain is Xylose isomerase (xylA), found in Bacillus subtilis (strain 168).